Reading from the N-terminus, the 247-residue chain is ATP synthase subunit a, chloroplastic (247 aa).

Helical transmembrane passes span 38 to 58, 95 to 115, 134 to 154, 199 to 219, and 220 to 240; these read QVLI…TIAV, VPFI…GALL, INTT…AGLT, LVVV…VMLL, and GLFT…AYIG.

This sequence belongs to the ATPase A chain family. F-type ATPases have 2 components, CF(1) - the catalytic core - and CF(0) - the membrane proton channel. CF(1) has five subunits: alpha(3), beta(3), gamma(1), delta(1), epsilon(1). CF(0) has four main subunits: a, b, b' and c.

The protein localises to the plastid. It localises to the chloroplast thylakoid membrane. Its function is as follows. Key component of the proton channel; it plays a direct role in the translocation of protons across the membrane. This chain is ATP synthase subunit a, chloroplastic, found in Solanum lycopersicum (Tomato).